Reading from the N-terminus, the 242-residue chain is Small ribosomal subunit protein uS2 (242 aa).

The protein belongs to the universal ribosomal protein uS2 family.

The polypeptide is Small ribosomal subunit protein uS2 (Shewanella putrefaciens (strain CN-32 / ATCC BAA-453)).